The primary structure comprises 154 residues: Crossover junction endodeoxyribonuclease RuvC (154 aa).

Active-site residues include Asp-7, Glu-67, and Asp-139. Residues Asp-7, Glu-67, and Asp-139 each contribute to the Mg(2+) site.

The protein belongs to the RuvC family. Homodimer which binds Holliday junction (HJ) DNA. The HJ becomes 2-fold symmetrical on binding to RuvC with unstacked arms; it has a different conformation from HJ DNA in complex with RuvA. In the full resolvosome a probable DNA-RuvA(4)-RuvB(12)-RuvC(2) complex forms which resolves the HJ. Mg(2+) is required as a cofactor.

Its subcellular location is the cytoplasm. The catalysed reaction is Endonucleolytic cleavage at a junction such as a reciprocal single-stranded crossover between two homologous DNA duplexes (Holliday junction).. Its function is as follows. The RuvA-RuvB-RuvC complex processes Holliday junction (HJ) DNA during genetic recombination and DNA repair. Endonuclease that resolves HJ intermediates. Cleaves cruciform DNA by making single-stranded nicks across the HJ at symmetrical positions within the homologous arms, yielding a 5'-phosphate and a 3'-hydroxyl group; requires a central core of homology in the junction. The consensus cleavage sequence is 5'-(A/T)TT(C/G)-3'. Cleavage occurs on the 3'-side of the TT dinucleotide at the point of strand exchange. HJ branch migration catalyzed by RuvA-RuvB allows RuvC to scan DNA until it finds its consensus sequence, where it cleaves and resolves the cruciform DNA. The polypeptide is Crossover junction endodeoxyribonuclease RuvC (Synechococcus sp. (strain CC9605)).